The primary structure comprises 188 residues: Mitochondrial import receptor subunit TOM20 homolog (188 aa).

The Mitochondrial intermembrane segment spans residues 1–12; sequence MTDTLFGFNKSN. A helical transmembrane segment spans residues 13–31; sequence VVLAAGVAGAAFLGYCIYF. Residues 32-188 are Cytoplasmic-facing; sequence DHKRINAPDY…ELIDDTDDLE (157 aa). 2 disordered regions span residues 48 to 67 and 155 to 188; these read KRRA…PAGG and ADEA…DDLE. Positions 58–67 are enriched in low complexity; it reads MAARRPPAGG.

This sequence belongs to the Tom20 family. As to quaternary structure, forms part of the preprotein translocase complex of the outer mitochondrial membrane (TOM complex).

The protein localises to the mitochondrion outer membrane. In terms of biological role, central component of the receptor complex responsible for the recognition and translocation of cytosolically synthesized mitochondrial preproteins. Together with TOM22 functions as the transit peptide receptor at the surface of the mitochondrion outer membrane and facilitates the movement of preproteins into the translocation pore. In Caenorhabditis briggsae, this protein is Mitochondrial import receptor subunit TOM20 homolog (tomm-20).